The sequence spans 404 residues: S-adenosylmethionine synthase (404 aa).

His17 serves as a coordination point for ATP. Residue Asp19 participates in Mg(2+) binding. A K(+)-binding site is contributed by Glu45. L-methionine contacts are provided by Glu58 and Gln101. Positions 101–111 (QSADINRGVDR) are flexible loop. Residues 172–174 (DAK), 245–246 (RF), Asp254, 260–261 (RK), Ala277, and Lys281 contribute to the ATP site. Asp254 is an L-methionine binding site. L-methionine is bound at residue Lys285.

This sequence belongs to the AdoMet synthase family. In terms of assembly, homotetramer; dimer of dimers. It depends on Mg(2+) as a cofactor. The cofactor is K(+).

It is found in the cytoplasm. The enzyme catalyses L-methionine + ATP + H2O = S-adenosyl-L-methionine + phosphate + diphosphate. Its pathway is amino-acid biosynthesis; S-adenosyl-L-methionine biosynthesis; S-adenosyl-L-methionine from L-methionine: step 1/1. In terms of biological role, catalyzes the formation of S-adenosylmethionine (AdoMet) from methionine and ATP. The overall synthetic reaction is composed of two sequential steps, AdoMet formation and the subsequent tripolyphosphate hydrolysis which occurs prior to release of AdoMet from the enzyme. The sequence is that of S-adenosylmethionine synthase from Chlorobium luteolum (strain DSM 273 / BCRC 81028 / 2530) (Pelodictyon luteolum).